Reading from the N-terminus, the 601-residue chain is MRLSQSLFVTLREDPADAEIPSHKLLLRAGYIRRIGRGIYAYLPLMWRVLQKVSQIVREEMNATGAQETLLPQLQPAEIWQESGRWDTYTQAEGIMFSLRDRLDGELGLGPTHEEVITTIAKDMIRSYRQLPQHLYQIQTKFRDEIRPRFGLMRGREFIMKDGYSFHASEECLKKTYADMDQAYRNMLRRCGLQFRAVEADSGAIGGSGSQEFMILADAGEDEILYTEDEKYAANTEKAVSLPVEAIASPFNSFEKRETPNTATIESLCKFLNCSPTCVVKNVLYQVVYNNGKTVLALISIRGDQDVNEVKLQNELTKLAPNYDAKTVISLTVPDADAQQKWAAKSLPLGYISPALADDCIAKNKAVSGEFLRLVDPTAATLENFVTGADETNYHVLGANWGTEFKLPPLQVDVRLAKAGDRAVHDPTQILQTARGIEAGHIFQLGTKYSEAMGATFTDENGKEHPLVMGCYGVGVSRLAQAAVEQSYDENGIIWPVAIAPYHAVVVVPNVKSEEQMAAAEKLYADLNAAGVETILDDRNERAGVKFKDAELIGIPFRVVTGKSLKDGKVEVVRRKEGDRQDLDLDAVVATLKNWVEAAGQ.

The protein belongs to the class-II aminoacyl-tRNA synthetase family. ProS type 1 subfamily. As to quaternary structure, homodimer.

It is found in the cytoplasm. It catalyses the reaction tRNA(Pro) + L-proline + ATP = L-prolyl-tRNA(Pro) + AMP + diphosphate. Functionally, catalyzes the attachment of proline to tRNA(Pro) in a two-step reaction: proline is first activated by ATP to form Pro-AMP and then transferred to the acceptor end of tRNA(Pro). As ProRS can inadvertently accommodate and process non-cognate amino acids such as alanine and cysteine, to avoid such errors it has two additional distinct editing activities against alanine. One activity is designated as 'pretransfer' editing and involves the tRNA(Pro)-independent hydrolysis of activated Ala-AMP. The other activity is designated 'posttransfer' editing and involves deacylation of mischarged Ala-tRNA(Pro). The misacylated Cys-tRNA(Pro) is not edited by ProRS. The chain is Proline--tRNA ligase from Picosynechococcus sp. (strain ATCC 27264 / PCC 7002 / PR-6) (Agmenellum quadruplicatum).